Consider the following 398-residue polypeptide: CCA-adding enzyme (398 aa).

ATP contacts are provided by glycine 32 and arginine 35. Residues glycine 32 and arginine 35 each coordinate CTP. Aspartate 45 and aspartate 47 together coordinate Mg(2+). 5 residues coordinate ATP: arginine 116, aspartate 159, arginine 162, arginine 165, and arginine 168. Residues arginine 116, aspartate 159, arginine 162, arginine 165, and arginine 168 each coordinate CTP.

Belongs to the tRNA nucleotidyltransferase/poly(A) polymerase family. Bacterial CCA-adding enzyme type 3 subfamily. In terms of assembly, homodimer. Requires Mg(2+) as cofactor.

The catalysed reaction is a tRNA precursor + 2 CTP + ATP = a tRNA with a 3' CCA end + 3 diphosphate. It carries out the reaction a tRNA with a 3' CCA end + 2 CTP + ATP = a tRNA with a 3' CCACCA end + 3 diphosphate. Catalyzes the addition and repair of the essential 3'-terminal CCA sequence in tRNAs without using a nucleic acid template. Adds these three nucleotides in the order of C, C, and A to the tRNA nucleotide-73, using CTP and ATP as substrates and producing inorganic pyrophosphate. tRNA 3'-terminal CCA addition is required both for tRNA processing and repair. Also involved in tRNA surveillance by mediating tandem CCA addition to generate a CCACCA at the 3' terminus of unstable tRNAs. While stable tRNAs receive only 3'-terminal CCA, unstable tRNAs are marked with CCACCA and rapidly degraded. In Lacticaseibacillus paracasei (strain ATCC 334 / BCRC 17002 / CCUG 31169 / CIP 107868 / KCTC 3260 / NRRL B-441) (Lactobacillus paracasei), this protein is CCA-adding enzyme.